The following is a 209-amino-acid chain: Large ribosomal subunit protein uL3 (209 aa).

Gln-150 carries the post-translational modification N5-methylglutamine.

Belongs to the universal ribosomal protein uL3 family. In terms of assembly, part of the 50S ribosomal subunit. Forms a cluster with proteins L14 and L19. Methylated by PrmB.

Its function is as follows. One of the primary rRNA binding proteins, it binds directly near the 3'-end of the 23S rRNA, where it nucleates assembly of the 50S subunit. The sequence is that of Large ribosomal subunit protein uL3 from Vibrio vulnificus (strain YJ016).